The chain runs to 130 residues: Protein ApaG (130 aa).

The region spanning 3-127 (SAVTRGIEVT…FSLDVPEQRR (125 aa)) is the ApaG domain.

This Brucella canis (strain ATCC 23365 / NCTC 10854 / RM-666) protein is Protein ApaG.